We begin with the raw amino-acid sequence, 472 residues long: MRTWKKGTAVASTSTLDNVINLCKRRGFVFPCGEIYGGTRAAWDYGPFGVELKENIKRQWWRAMVTRRDDVVGLDSSVILPREVWVASGHVGVFNDPLTECLSCHKRMRADHLQEGHAAKHGIADPDSISLEEVNCPNCGNKGQWTEPRDFNMMLKTYLGPVEDKSGLHYLRPETAQGIFVNFQNVLTSARKKPPFGIAQTGKSFRNEITPGNFIFRTREFEQMEMEFFVEPGTDEEWHQYWIDVRTAWYTDLGINPDNLRHYEHPKEKLSHYSKRTVDVEYKFGFSGSDWGELEGIANRTDFDLGNHSRHSGKDLSYYDQANNKRYLPYVIEPAAGLTRSLMAFMVDAYTEDEAPNAKGGVDKRTVLKLDPRLSPVKAAVLPLSRNSDLSPKARDLAARLREHWNVDFDDAQAIGKRYRRQDEIGTPFCITVDFDSLEDDAVTIRERDTMAQQRVSIDKVEEYLGGKLLGC.

Positions 109 and 174 each coordinate substrate. ATP contacts are provided by residues Arg-206 to Glu-208, Phe-216 to Phe-221, Glu-293 to Leu-294, and Gly-337 to Arg-340. Phe-221–Glu-225 contributes to the substrate binding site. Glu-333–Gly-337 lines the substrate pocket.

It belongs to the class-II aminoacyl-tRNA synthetase family. Homodimer.

The protein resides in the cytoplasm. It carries out the reaction tRNA(Gly) + glycine + ATP = glycyl-tRNA(Gly) + AMP + diphosphate. In terms of biological role, catalyzes the attachment of glycine to tRNA(Gly). In Cutibacterium acnes (strain DSM 16379 / KPA171202) (Propionibacterium acnes), this protein is Glycine--tRNA ligase.